Here is a 493-residue protein sequence, read N- to C-terminus: uncharacterized protein (493 aa).

Phosphoserine is present on S328. Positions 466 to 486 (AESNSGRGQNSKTKTTSVNLS) are enriched in polar residues. The interval 466–493 (AESNSGRGQNSKTKTTSVNLSRNKRTRT) is disordered.

This is an uncharacterized protein from Schizosaccharomyces pombe (strain 972 / ATCC 24843) (Fission yeast).